Consider the following 199-residue polypeptide: MAFNIESLLEKKSNPVEEGNDFEEENDSEKNGEEDEEEEEKNVIDGWTNMATSQLAMFAIANDLRTPTLVELQMLLGVSARKHDYKRSRKSVCERKPRQAYSARQLDRLETEFQTDKYLSVNKRIQLSQTLNLTETQIKTWFQNRRTKWKKQLTSSIRQMVKDAPTSTSVGVPFQSLLTPPTPPTTLACHVNSLFACEQ.

The segment at M1 to N42 is disordered. Residues E18–E40 show a composition bias toward acidic residues. The homeobox DNA-binding region spans E94–L153.

It localises to the nucleus. Functionally, probable transcription factor. Required for MC motor neuron differentiation and function, including role in modulating pharyngeal pumping. Regulates gene expression of FMRFamide-like neuropeptide flp-2 in MC motor neurons. May act downstream of transcription factor pha-4. The chain is Homeobox protein ceh-19 (ceh-19) from Caenorhabditis elegans.